The following is a 299-amino-acid chain: Large ribosomal subunit protein eL22 (299 aa).

Disordered regions lie at residues 1–142 (MAPT…AAPA) and 155–178 (VAKPAPKPKAKAAPAPSKVVKKNV). 2 stretches are compositionally biased toward basic and acidic residues: residues 33-42 (GKVEKPKAEA) and 55-64 (KASEAAKDVK). 2 stretches are compositionally biased toward low complexity: residues 65–98 (AAAAAAKPAAAKPAAAKPAAASKDAGKKAPAAAA) and 105–142 (AAAAPAPAKAAPAKKAASTPAAAPPAKKAAPAKAAAPA).

Belongs to the eukaryotic ribosomal protein eL22 family.

In Drosophila melanogaster (Fruit fly), this protein is Large ribosomal subunit protein eL22 (RpL22).